A 229-amino-acid chain; its full sequence is CRISPR pre-crRNA endoribonuclease Cas5d (229 aa).

It belongs to the CRISPR-associated protein Cas5 family. Subtype I-C/Dvulg subfamily. Does not require a metal cofactor. is required as a cofactor.

Its function is as follows. CRISPR (clustered regularly interspaced short palindromic repeat) is an adaptive immune system that provides protection against mobile genetic elements (viruses, transposable elements and conjugative plasmids). CRISPR clusters contain spacers, sequences complementary to antecedent mobile elements, and target invading nucleic acids. CRISPR clusters are transcribed and processed into CRISPR RNA (crRNA). This protein is a sequence-specific endonuclease that cleaves pre-crRNA into mature crRNA, possibly by an intramolecular attack of the 2'-hydroxyl group of G26 on the scissile phosphodiester, cutting the precursor 3' to G26 residue yielding 5'-hydroxyl and 2' and/or 3' ends lacking a hydroxyl group (perhaps a 2'/3' cyclic phosphodiester). Requires between 4 and 8 nt downstream of the cleavage site for both binding and cleavage of pre-crRNA. Substitution with dG at this position abolishes cleavage but not RNA binding. Does not cleave pre-crRNA associated with the M.succiniciproducens strain MBEL55E Cas5 protein (AC Q65TW5) CRISPR locus. In Thermus thermophilus (strain ATCC BAA-163 / DSM 7039 / HB27), this protein is CRISPR pre-crRNA endoribonuclease Cas5d.